Here is a 119-residue protein sequence, read N- to C-terminus: Centrocin 1 (119 aa).

The N-terminal stretch at 1 to 20 is a signal peptide; sequence MMIKIAVVLCAVMATTMVRA. Residues 21–50 constitute a propeptide that is removed on maturation; that stretch reads KYVEEQELADLLDLLISEEVSSPDDAVALQ. A 6'-bromotryptophan mark is found at W52 and W53. The cysteines at positions 75 and 110 are disulfide-linked. The propeptide occupies 81 to 104; sequence SPQEARAKVLEAFPEMKEADLDEE. Asparagine amide is present on N117.

Heterodimer of a light and a heavy chain, probably disulfide-linked.

Functionally, has antimicrobial activity against Gram-negative bacteria, Gram-positive bacteria and against fungi with minimum inhibitory concentration (MIC) between 0.78 uM and 50 uM. Shows little hemolytic activity even at a concentration of 100 uM. Has no antimicrobial activity. Shows no hemolytic activity. The sequence is that of Centrocin 1 from Echinus esculentus (Sea urchin).